The sequence spans 306 residues: tRNA pseudouridine synthase B (306 aa).

Asp38 acts as the Nucleophile in catalysis.

It belongs to the pseudouridine synthase TruB family. Type 1 subfamily.

The catalysed reaction is uridine(55) in tRNA = pseudouridine(55) in tRNA. Responsible for synthesis of pseudouridine from uracil-55 in the psi GC loop of transfer RNAs. This chain is tRNA pseudouridine synthase B, found in Syntrophotalea carbinolica (strain DSM 2380 / NBRC 103641 / GraBd1) (Pelobacter carbinolicus).